The primary structure comprises 461 residues: Methylthioribose transporter (461 aa).

12 consecutive transmembrane segments (helical) span residues 33–53 (LLGI…TVAA), 56–76 (AGPA…LAAF), 102–122 (LLAF…LSAV), 152–172 (MAGA…TAIV), 185–205 (VIVL…IGYV), 213–233 (FMPF…FAYL), 254–274 (VGII…SLVL), 301–321 (VAGI…LALL), 355–375 (TWLT…GTLA), 376–396 (HLVN…VIVL), 409–429 (VPFV…FMYS), and 432–452 (GVTW…YFLY).

Belongs to the amino acid-polyamine-organocation (APC) superfamily.

Its subcellular location is the cell membrane. Functionally, involved in import of methylthioribose (MTR) into the cell. This Bacillus subtilis (strain 168) protein is Methylthioribose transporter.